Consider the following 510-residue polypeptide: Cytochrome P450 4A6 (510 aa).

The propeptide occupies 1-4 (MSVS). E321 and C457 together coordinate heme.

This sequence belongs to the cytochrome P450 family. Heme serves as cofactor. As to expression, liver; kidney.

The protein localises to the endoplasmic reticulum membrane. Its subcellular location is the microsome membrane. It carries out the reaction an omega-methyl-long-chain fatty acid + reduced [NADPH--hemoprotein reductase] + O2 = an omega-hydroxy-long-chain fatty acid + oxidized [NADPH--hemoprotein reductase] + H2O + H(+). Cytochromes P450 are a group of heme-thiolate monooxygenases. In liver microsomes, this enzyme is involved in an NADPH-dependent electron transport pathway. It oxidizes a variety of structurally unrelated compounds, including steroids, fatty acids, and xenobiotics. Functionally, the kidney P-450 system is rather specialized for the omega-hydroxylation of fatty acids. Both P450-KA1 and P450-KA2 catalyze the omega- and (omega-1)-hydroxylation of various fatty acids with no drug-metabolizing activity, and hydroxylate prostaglandin A1 and A2 solely at the omega-position. The sequence is that of Cytochrome P450 4A6 (CYP4A6) from Oryctolagus cuniculus (Rabbit).